The primary structure comprises 342 residues: Flap endonuclease 1 (342 aa).

Residues 1 to 99 (MGVKIGELIE…RAIEERVRAR (99 aa)) form an N-domain region. Mg(2+) is bound by residues aspartate 28, aspartate 81, glutamate 153, glutamate 155, aspartate 174, aspartate 176, and aspartate 237. Residues 117–259 (EARKYAQAAL…RALELVKKYK (143 aa)) are I-domain.

This sequence belongs to the XPG/RAD2 endonuclease family. FEN1 subfamily. Interacts with PCNA. PCNA stimulates the nuclease activity without altering cleavage specificity. Mg(2+) is required as a cofactor.

Its function is as follows. Structure-specific nuclease with 5'-flap endonuclease and 5'-3' exonuclease activities involved in DNA replication and repair. During DNA replication, cleaves the 5'-overhanging flap structure that is generated by displacement synthesis when DNA polymerase encounters the 5'-end of a downstream Okazaki fragment. Binds the unpaired 3'-DNA end and kinks the DNA to facilitate 5' cleavage specificity. Cleaves one nucleotide into the double-stranded DNA from the junction in flap DNA, leaving a nick for ligation. Also involved in the base excision repair (BER) pathway. Acts as a genome stabilization factor that prevents flaps from equilibrating into structures that lead to duplications and deletions. Also possesses 5'-3' exonuclease activity on nicked or gapped double-stranded DNA. This chain is Flap endonuclease 1, found in Korarchaeum cryptofilum (strain OPF8).